Here is a 234-residue protein sequence, read N- to C-terminus: Triggering receptor expressed on myeloid cells 1 (234 aa).

An N-terminal signal peptide occupies residues 1–20 (MRKTRLWGLLWMLFVSELRA). Residues 21–205 (ATKLTEEKYE…TDIIRVPVFN (185 aa)) are Extracellular-facing. Positions 26–134 (EEKYELKEGQ…LFDRIRLVVT (109 aa)) constitute an Ig-like V-type domain. Cys-41 and Cys-113 are disulfide-bonded. Residues Asn-146, Asn-191, and Asn-194 are each glycosylated (N-linked (GlcNAc...) asparagine). A helical transmembrane segment spans residues 206–226 (IVILLAGGFLSKSLVFSVLFA). Residues 227-234 (VTLRSFVP) are Cytoplasmic-facing.

In terms of assembly, monomer. Homomultimer; when activated. Interacts with TYROBP/DAP12. Interacts with TLR4. In terms of processing, glycosylated. In terms of tissue distribution, mostly expressed by immune cells of the myeloid lineage, such as monocytes, macrophages, neutrophils and dendritic cells. Expression is associated with a mature stage of myeloid development. Highly expressed in adult liver, lung and spleen than in corresponding fetal tissue. Also expressed in the lymph node, placenta, spinal cord and heart tissues. Isoform 2 was detected in the lung, liver and mature monocytes.

The protein localises to the cell membrane. It localises to the secreted. In terms of biological role, cell surface receptor that plays important roles in innate and adaptive immunity by amplifying inflammatory responses. Upon activation by various ligands such as PGLYRP1, HMGB1 or HSP70, multimerizes and forms a complex with transmembrane adapter TYROBP/DAP12. In turn, initiates a SYK-mediated cascade of tyrosine phosphorylation, activating multiple downstream mediators such as BTK, MAPK1, MAPK3 or phospholipase C-gamma. This cascade promotes the neutrophil- and macrophage-mediated release of pro-inflammatory cytokines and/or chemokines, as well as their migration and thereby amplifies inflammatory responses that are triggered by bacterial and fungal infections. By also promoting the amplification of inflammatory signals that are initially triggered by Toll-like receptor (TLR) and NOD-like receptor engagement, plays a major role in the pathophysiology of acute and chronic inflammatory diseases of different etiologies including septic shock and atherosclerosis. Its function is as follows. Acts as a decoy receptor, counterbalancing TREM1 pro-inflammatory activity through the neutralization of its ligand. In Homo sapiens (Human), this protein is Triggering receptor expressed on myeloid cells 1 (TREM1).